The primary structure comprises 722 residues: D-(-)-3-hydroxybutyrate oligomer hydrolase (722 aa).

Residues 1–11 (MQQRHLSQSAH) show a composition bias toward polar residues. The interval 1–20 (MQQRHLSQSAHSHGHGTRRA) is disordered. The signal sequence occupies residues 1 to 36 (MQQRHLSQSAHSHGHGTRRAHRRNTIAIAVATLAVA). Residue Ser327 is the Charge relay system of the active site. The tract at residues 671-697 (PPSQVVRTTPRGGADTDTVGPRIQPSN) is disordered.

It belongs to the D-(-)-3-hydroxybutyrate oligomer hydrolase family.

The protein localises to the secreted. It catalyses the reaction (3R)-hydroxybutanoate dimer + H2O = 2 (R)-3-hydroxybutanoate + H(+). Its pathway is lipid metabolism; butanoate metabolism. Its function is as follows. Participates in the degradation of poly-3-hydroxybutyrate (PHB). It works downstream of poly(3-hydroxybutyrate) depolymerase, hydrolyzing D(-)-3-hydroxybutyrate oligomers of various length (3HB-oligomers) into 3HB-monomers. This is D-(-)-3-hydroxybutyrate oligomer hydrolase from Cupriavidus metallidurans (strain ATCC 43123 / DSM 2839 / NBRC 102507 / CH34) (Ralstonia metallidurans).